Reading from the N-terminus, the 360-residue chain is Inward rectifier potassium channel 13 (360 aa).

The Cytoplasmic segment spans residues 1-50 (MDSSNCKVIAPLLSQRYRRMVTKDGHSTLQMDGAQRGLAYLRDAWGILMD). Residues 51 to 77 (MRWRWMMLVFSASFVVHWLVFAVLWYV) form a helical membrane-spanning segment. The Extracellular segment spans residues 78 to 105 (LAEMNGDLELDHDAPPENHTICVKYITS). Residues 106–122 (FTAAFSFSLETQLTIGY) constitute an intramembrane region (helical; Pore-forming). A Selectivity filter motif is present at residues 119 to 124 (TIGYGT). Residues 123–131 (GTMFPSGDC) lie on the Extracellular side of the membrane. A helical membrane pass occupies residues 132–157 (PSAIALLAIQMLLGLMLEAFITGAFV). Topologically, residues 158-360 (AKIARPKNRA…FQISETGLTE (203 aa)) are cytoplasmic. At serine 201 the chain carries Phosphoserine; by PKC. Serine 287 is subject to Phosphoserine; by PKA.

It belongs to the inward rectifier-type potassium channel (TC 1.A.2.1) family. KCNJ13 subfamily. Homotetramer. Interacts with RAB28; the interaction may facilitate cone outer segments phagocytosis. Post-translationally, phosphorylation at Ser-201 by PKC strongly inhibits ionic currents, while phosphorylation at Ser-287 by PKA increases them. In terms of tissue distribution, predominantly expressed in small intestine. Expression is also detected in stomach, kidney, and all central nervous system regions tested with the exception of spinal cord.

The protein localises to the membrane. Its subcellular location is the cell membrane. The enzyme catalyses K(+)(in) = K(+)(out). Inhibited by Ba(2+) and Cs(+), although sensitivity to those inhibitors is much lower than in other Kir channels. Functionally, inward rectifier potassium channels are characterized by a greater tendency to allow potassium to flow into the cell rather than out of it. Their voltage dependence is regulated by the concentration of extracellular potassium; as external potassium is raised, the voltage range of the channel opening shifts to more positive voltages. The inward rectification is mainly due to the blockage of outward current by internal magnesium. KCNJ13 has a very low single channel conductance, low sensitivity to block by external barium and cesium, and no dependence of its inward rectification properties on the internal blocking particle magnesium. The protein is Inward rectifier potassium channel 13 (KCNJ13) of Homo sapiens (Human).